Reading from the N-terminus, the 180-residue chain is UPF0340 protein RBAM_034070 (180 aa).

It belongs to the UPF0340 family.

This is UPF0340 protein RBAM_034070 from Bacillus velezensis (strain DSM 23117 / BGSC 10A6 / LMG 26770 / FZB42) (Bacillus amyloliquefaciens subsp. plantarum).